We begin with the raw amino-acid sequence, 345 residues long: D-erythrose-4-phosphate dehydrogenase (345 aa).

Position 11 to 12 (Arg11 to Ile12) interacts with NAD(+). Substrate contacts are provided by residues Ser158–Thr160, Arg204, Thr217–Lys218, and Arg240. The active-site Nucleophile is the Cys159. Asn322 lines the NAD(+) pocket.

It belongs to the glyceraldehyde-3-phosphate dehydrogenase family. Epd subfamily. In terms of assembly, homotetramer.

The protein resides in the cytoplasm. It catalyses the reaction D-erythrose 4-phosphate + NAD(+) + H2O = 4-phospho-D-erythronate + NADH + 2 H(+). It participates in cofactor biosynthesis; pyridoxine 5'-phosphate biosynthesis; pyridoxine 5'-phosphate from D-erythrose 4-phosphate: step 1/5. Functionally, catalyzes the NAD-dependent conversion of D-erythrose 4-phosphate to 4-phosphoerythronate. This chain is D-erythrose-4-phosphate dehydrogenase, found in Vibrio campbellii (strain ATCC BAA-1116).